The following is a 248-amino-acid chain: DNA repair protein RecO (248 aa).

Belongs to the RecO family.

Functionally, involved in DNA repair and RecF pathway recombination. The chain is DNA repair protein RecO from Bartonella tribocorum (strain CIP 105476 / IBS 506).